The primary structure comprises 257 residues: Pyridoxine 5'-phosphate synthase (257 aa).

N6 contributes to the 3-amino-2-oxopropyl phosphate binding site. Residue 8-9 (DH) coordinates 1-deoxy-D-xylulose 5-phosphate. R17 is a 3-amino-2-oxopropyl phosphate binding site. H41 acts as the Proton acceptor in catalysis. 2 residues coordinate 1-deoxy-D-xylulose 5-phosphate: R43 and H48. The active-site Proton acceptor is the E68. T98 serves as a coordination point for 1-deoxy-D-xylulose 5-phosphate. H210 acts as the Proton donor in catalysis. Residues G211 and 232 to 233 (GQ) contribute to the 3-amino-2-oxopropyl phosphate site.

Belongs to the PNP synthase family. As to quaternary structure, homooctamer; tetramer of dimers.

Its subcellular location is the cytoplasm. It catalyses the reaction 3-amino-2-oxopropyl phosphate + 1-deoxy-D-xylulose 5-phosphate = pyridoxine 5'-phosphate + phosphate + 2 H2O + H(+). The protein operates within cofactor biosynthesis; pyridoxine 5'-phosphate biosynthesis; pyridoxine 5'-phosphate from D-erythrose 4-phosphate: step 5/5. Its function is as follows. Catalyzes the complicated ring closure reaction between the two acyclic compounds 1-deoxy-D-xylulose-5-phosphate (DXP) and 3-amino-2-oxopropyl phosphate (1-amino-acetone-3-phosphate or AAP) to form pyridoxine 5'-phosphate (PNP) and inorganic phosphate. This chain is Pyridoxine 5'-phosphate synthase, found in Campylobacter jejuni subsp. doylei (strain ATCC BAA-1458 / RM4099 / 269.97).